The sequence spans 183 residues: ATP synthase subunit b, chloroplastic (183 aa).

Residues Asp28 to Leu48 traverse the membrane as a helical segment.

It belongs to the ATPase B chain family. As to quaternary structure, F-type ATPases have 2 components, F(1) - the catalytic core - and F(0) - the membrane proton channel. F(1) has five subunits: alpha(3), beta(3), gamma(1), delta(1), epsilon(1). F(0) has four main subunits: a(1), b(1), b'(1) and c(10-14). The alpha and beta chains form an alternating ring which encloses part of the gamma chain. F(1) is attached to F(0) by a central stalk formed by the gamma and epsilon chains, while a peripheral stalk is formed by the delta, b and b' chains.

Its subcellular location is the plastid. The protein resides in the chloroplast thylakoid membrane. Functionally, f(1)F(0) ATP synthase produces ATP from ADP in the presence of a proton or sodium gradient. F-type ATPases consist of two structural domains, F(1) containing the extramembraneous catalytic core and F(0) containing the membrane proton channel, linked together by a central stalk and a peripheral stalk. During catalysis, ATP synthesis in the catalytic domain of F(1) is coupled via a rotary mechanism of the central stalk subunits to proton translocation. In terms of biological role, component of the F(0) channel, it forms part of the peripheral stalk, linking F(1) to F(0). This Porphyra purpurea (Red seaweed) protein is ATP synthase subunit b, chloroplastic.